Consider the following 65-residue polypeptide: Large ribosomal subunit protein uL29 (65 aa).

The protein belongs to the universal ribosomal protein uL29 family.

The chain is Large ribosomal subunit protein uL29 from Acidithiobacillus ferrooxidans (strain ATCC 23270 / DSM 14882 / CIP 104768 / NCIMB 8455) (Ferrobacillus ferrooxidans (strain ATCC 23270)).